A 391-amino-acid chain; its full sequence is Phosphoglycerate kinase (391 aa).

Substrate contacts are provided by residues 21–23 (DLN), arginine 36, 59–62 (HLGR), arginine 113, and arginine 146. ATP-binding positions include lysine 197, glutamate 319, and 345–348 (GGDT).

Belongs to the phosphoglycerate kinase family. Monomer.

It is found in the cytoplasm. The enzyme catalyses (2R)-3-phosphoglycerate + ATP = (2R)-3-phospho-glyceroyl phosphate + ADP. The protein operates within carbohydrate degradation; glycolysis; pyruvate from D-glyceraldehyde 3-phosphate: step 2/5. The polypeptide is Phosphoglycerate kinase (Xanthomonas euvesicatoria pv. vesicatoria (strain 85-10) (Xanthomonas campestris pv. vesicatoria)).